The following is a 352-amino-acid chain: Protein-glutamate methylesterase/protein-glutamine glutaminase 1 (352 aa).

Residues 5–122 (KVLVVDDSAF…SLDVLSVKEE (118 aa)) enclose the Response regulatory domain. Position 56 is a 4-aspartylphosphate (aspartate 56). Residues 155-352 (PDQDRKLNKL…EITEEVLSML (198 aa)) form the CheB-type methylesterase domain. Catalysis depends on residues serine 170, histidine 197, and aspartate 297.

This sequence belongs to the CheB family. Post-translationally, phosphorylated by CheA. Phosphorylation of the N-terminal regulatory domain activates the methylesterase activity.

The protein resides in the cytoplasm. The enzyme catalyses [protein]-L-glutamate 5-O-methyl ester + H2O = L-glutamyl-[protein] + methanol + H(+). The catalysed reaction is L-glutaminyl-[protein] + H2O = L-glutamyl-[protein] + NH4(+). Its function is as follows. Involved in chemotaxis. Part of a chemotaxis signal transduction system that modulates chemotaxis in response to various stimuli. Catalyzes the demethylation of specific methylglutamate residues introduced into the chemoreceptors (methyl-accepting chemotaxis proteins or MCP) by CheR. Also mediates the irreversible deamidation of specific glutamine residues to glutamic acid. The protein is Protein-glutamate methylesterase/protein-glutamine glutaminase 1 of Syntrophomonas wolfei subsp. wolfei (strain DSM 2245B / Goettingen).